A 769-amino-acid chain; its full sequence is RNA-directed RNA polymerase (769 aa).

Residues 463 to 579 (PIGIGLDASR…FCEKGDFNRI (117 aa)) form the RdRp catalytic domain.

Belongs to the tombusviridae RNA polymerase family.

It carries out the reaction RNA(n) + a ribonucleoside 5'-triphosphate = RNA(n+1) + diphosphate. Probable polymerase. In Dianthus barbatus (Carnation), this protein is RNA-directed RNA polymerase.